Here is a 376-residue protein sequence, read N- to C-terminus: Succinyl-diaminopimelate desuccinylase (376 aa).

Histidine 67 lines the Zn(2+) pocket. Aspartate 69 is a catalytic residue. Residue aspartate 100 coordinates Zn(2+). Glutamate 134 (proton acceptor) is an active-site residue. Residues glutamate 135, glutamate 163, and histidine 349 each contribute to the Zn(2+) site.

It belongs to the peptidase M20A family. DapE subfamily. As to quaternary structure, homodimer. Zn(2+) serves as cofactor. Co(2+) is required as a cofactor.

It catalyses the reaction N-succinyl-(2S,6S)-2,6-diaminopimelate + H2O = (2S,6S)-2,6-diaminopimelate + succinate. It functions in the pathway amino-acid biosynthesis; L-lysine biosynthesis via DAP pathway; LL-2,6-diaminopimelate from (S)-tetrahydrodipicolinate (succinylase route): step 3/3. In terms of biological role, catalyzes the hydrolysis of N-succinyl-L,L-diaminopimelic acid (SDAP), forming succinate and LL-2,6-diaminopimelate (DAP), an intermediate involved in the bacterial biosynthesis of lysine and meso-diaminopimelic acid, an essential component of bacterial cell walls. This chain is Succinyl-diaminopimelate desuccinylase, found in Proteus mirabilis (strain HI4320).